The chain runs to 585 residues: MDVMKLDHDSVLKELERITSKAAEVQDNILRGILERNKDTEYLSKYMNGSKDVLEFKRAVPIIIYKDIYPYIQRIANGEDSSLITGHSITEILCSSGTSAGEPKLMPTIPEDLDRRTFLYNLIIPIVNKYITGLDKGKAMYLNFVKAETSTPCGLPIRAVLTSYYKSKHFQCRPYDPFNDLTSPIQTILCEDSNQSMYCQLLAGLIHRHKVMRLGAVFASAFLRAISYLEKKWSQLCEDIRTGSLNPMITDPGCQMAMSCLLMSPNPELASEIEEICGRSSWKGILCQLWPKAKFIEAVVTGSMAQYIPALEFFSQGKIPLVCPMYASSETYFGVNVEPLSKPSDVVFTLLPNMCYFEFIPLGKNGTLSFDLDDDEQVPCDKVVDLVNVKLGRYYELVVTTFAGLYRYRIGDVLQVAGFYNGAPQFRFICRRNVVLSIDLDKTNEEDLHRSITLAKKKLGSNAFLAEYTSYADTSSVPGHYVLFWEIQGHLEPKLMEECCVAVEEELDYIYRQCRTKERSIGALEIRVVKPGTFEKLMDLIISQGGSFNQYKTPRCVKSNSATFKLLNGHVMASFFSPRDPTWVP.

Belongs to the IAA-amido conjugating enzyme family.

Catalyzes the synthesis of indole-3-acetic acid (IAA)-amino acid conjugates, providing a mechanism for the plant to cope with the presence of excess auxin. In Arabidopsis thaliana (Mouse-ear cress), this protein is Putative indole-3-acetic acid-amido synthetase GH3.9 (GH3.9).